Here is a 322-residue protein sequence, read N- to C-terminus: Ferrochelatase (322 aa).

Positions 193 and 274 each coordinate Fe cation.

Belongs to the ferrochelatase family.

It is found in the cytoplasm. It catalyses the reaction heme b + 2 H(+) = protoporphyrin IX + Fe(2+). It functions in the pathway porphyrin-containing compound metabolism; protoheme biosynthesis; protoheme from protoporphyrin-IX: step 1/1. Catalyzes the ferrous insertion into protoporphyrin IX. The chain is Ferrochelatase from Aliivibrio fischeri (strain MJ11) (Vibrio fischeri).